The sequence spans 37 residues: Rugosin-C (37 aa).

A disulfide bridge connects residues Cys-31 and Cys-37.

Belongs to the frog skin active peptide (FSAP) family. Brevinin subfamily. In terms of tissue distribution, expressed by the skin glands.

It is found in the secreted. Has antibacterial activity against Gram-positive bacteria. The protein is Rugosin-C of Glandirana rugosa (Japanese wrinkled frog).